The following is a 228-amino-acid chain: L-ribulose-5-phosphate 4-epimerase UlaF (228 aa).

Substrate-binding positions include G26–N27, S43–G44, and S72–S73. Zn(2+) contacts are provided by D74, H93, and H95. Catalysis depends on D118, which acts as the Proton donor/acceptor. Residue H167 participates in Zn(2+) binding. Y225 acts as the Proton donor/acceptor in catalysis.

It belongs to the aldolase class II family. AraD/FucA subfamily. The cofactor is Zn(2+).

It carries out the reaction L-ribulose 5-phosphate = D-xylulose 5-phosphate. It functions in the pathway cofactor degradation; L-ascorbate degradation; D-xylulose 5-phosphate from L-ascorbate: step 4/4. Its function is as follows. Catalyzes the isomerization of L-ribulose 5-phosphate to D-xylulose 5-phosphate. Is involved in the anaerobic L-ascorbate utilization. The polypeptide is L-ribulose-5-phosphate 4-epimerase UlaF (Escherichia coli (strain SE11)).